The chain runs to 584 residues: Protein disulfide-isomerase-like protein of the testis (584 aa).

The signal sequence occupies residues 1–20 (MDLLWMPLLLVAACVSAVHS). N-linked (GlcNAc...) asparagine glycosylation is found at Asn-58, Asn-128, Asn-160, and Asn-340. One can recognise a Thioredoxin domain in the interval 388–451 (LVKQLVGKNF…IAKIDVTAND (64 aa)). Asn-540 carries N-linked (GlcNAc...) asparagine glycosylation. The short motif at 581 to 584 (KEEL) is the Prevents secretion from ER element.

It belongs to the protein disulfide isomerase family. In terms of assembly, homodimer. The homodimer is not disulfide-linked. Interacts with ERO1A and CLGN. In terms of processing, N-glycosylated. As to expression, testis-specific.

The protein localises to the endoplasmic reticulum. Functionally, probable redox-inactive chaperone involved in spermatogenesis. This chain is Protein disulfide-isomerase-like protein of the testis (PDILT), found in Homo sapiens (Human).